The chain runs to 163 residues: SKP1-like protein 4 (163 aa).

The interaction with the F-box domain of F-box proteins stretch occupies residues 105 to 163 (ILAANYLNIGGLLDLTCKAVADQMRGKTPEQMRAHFNIKNDYTPEEEAEVRNENKWAFE).

This sequence belongs to the SKP1 family. Part of a SCF (SKP1-cullin-F-box) protein ligase complex. Interacts with At1g56610, At1g67340, At3g62230, At3g59000, At4g27050, At1g55000, SKIP16 and SKIP32. In terms of tissue distribution, mostly expressed in inflorescence and siliques, and, to a lower extent, in seedlings, roots, and stems.

It is found in the nucleus. The protein operates within protein modification; protein ubiquitination. Involved in ubiquitination and subsequent proteasomal degradation of target proteins. Together with CUL1, RBX1 and a F-box protein, it forms a SCF E3 ubiquitin ligase complex. The functional specificity of this complex depends on the type of F-box protein. In the SCF complex, it serves as an adapter that links the F-box protein to CUL1. This is SKP1-like protein 4 (ASK4) from Arabidopsis thaliana (Mouse-ear cress).